We begin with the raw amino-acid sequence, 285 residues long: Eukaryotic translation initiation factor 3 subunit F-2 (285 aa).

The MPN domain occupies 11-145 (VFLKPLVLFQ…TRLYCAVEMG (135 aa)).

This sequence belongs to the eIF-3 subunit F family. Component of the eukaryotic translation initiation factor 3 (eIF-3) complex. The eIF-3 complex interacts with pix.

Its subcellular location is the cytoplasm. Component of the eukaryotic translation initiation factor 3 (eIF-3) complex, which is involved in protein synthesis of a specialized repertoire of mRNAs and, together with other initiation factors, stimulates binding of mRNA and methionyl-tRNAi to the 40S ribosome. The eIF-3 complex specifically targets and initiates translation of a subset of mRNAs involved in cell proliferation. The chain is Eukaryotic translation initiation factor 3 subunit F-2 from Drosophila simulans (Fruit fly).